A 324-amino-acid polypeptide reads, in one-letter code: Phthalate 4,5-dioxygenase oxygenase reductase subunit (324 aa).

Residues 9–111 (DGFTGLKVIA…ATPQNEFELI (103 aa)) form the FAD-binding FR-type domain. 115–229 (RQFIFVAGGI…PGSIHFESFG (115 aa)) serves as a coordination point for NAD(+). Residues 241–324 (FSVTLGRSGI…ARNDVLVLDL (84 aa)) enclose the 2Fe-2S ferredoxin-type domain. Residues C275, C280, C283, and C311 each contribute to the [2Fe-2S] cluster site.

It belongs to the PDR/VanB family. This dioxygenase system consists of two proteins: phthalate oxygenase and phthalate oxygenase reductase. It depends on FMN as a cofactor.

The catalysed reaction is phthalate + NADH + O2 + H(+) = cis-4,5-dihydroxycyclohexa-2,6-diene-1,2-dicarboxylate + NAD(+). The protein operates within xenobiotic degradation; phthalate degradation; 3,4-dihydroxybenzoate from phthalate: step 1/3. In Pseudomonas putida (Arthrobacter siderocapsulatus), this protein is Phthalate 4,5-dioxygenase oxygenase reductase subunit (pht2).